The primary structure comprises 130 residues: Small ribosomal subunit protein uS11 (130 aa).

A compositionally biased stretch (basic residues) spans 1 to 15; sequence MARPTKKSGPRKQKR. The interval 1 to 21 is disordered; that stretch reads MARPTKKSGPRKQKRNVPSGV.

Belongs to the universal ribosomal protein uS11 family. Part of the 30S ribosomal subunit. Interacts with proteins S7 and S18. Binds to IF-3.

In terms of biological role, located on the platform of the 30S subunit, it bridges several disparate RNA helices of the 16S rRNA. Forms part of the Shine-Dalgarno cleft in the 70S ribosome. The chain is Small ribosomal subunit protein uS11 from Synechococcus elongatus (strain ATCC 33912 / PCC 7942 / FACHB-805) (Anacystis nidulans R2).